The primary structure comprises 253 residues: Probable proteasome subunit alpha type-7 (253 aa).

S104 is subject to Phosphoserine.

Belongs to the peptidase T1A family. As to quaternary structure, the 26S proteasome consists of a 20S proteasome core and two 19S regulatory subunits. The 20S proteasome core is composed of 28 subunits that are arranged in four stacked rings, resulting in a barrel-shaped structure. The two end rings are each formed by seven alpha subunits, and the two central rings are each formed by seven beta subunits. The catalytic chamber with the active sites is on the inside of the barrel.

It is found in the cytoplasm. Its subcellular location is the nucleus. The proteasome is a multicatalytic proteinase complex which is characterized by its ability to cleave peptides with Arg, Phe, Tyr, Leu, and Glu adjacent to the leaving group at neutral or slightly basic pH. The proteasome has an ATP-dependent proteolytic activity. The polypeptide is Probable proteasome subunit alpha type-7 (pre10) (Schizosaccharomyces pombe (strain 972 / ATCC 24843) (Fission yeast)).